The sequence spans 487 residues: Glutamyl-tRNA(Gln) amidotransferase subunit A (487 aa).

Residues Lys-79 and Ser-158 each act as charge relay system in the active site. Ser-182 acts as the Acyl-ester intermediate in catalysis.

This sequence belongs to the amidase family. GatA subfamily. In terms of assembly, heterotrimer of A, B and C subunits.

It catalyses the reaction L-glutamyl-tRNA(Gln) + L-glutamine + ATP + H2O = L-glutaminyl-tRNA(Gln) + L-glutamate + ADP + phosphate + H(+). In terms of biological role, allows the formation of correctly charged Gln-tRNA(Gln) through the transamidation of misacylated Glu-tRNA(Gln) in organisms which lack glutaminyl-tRNA synthetase. The reaction takes place in the presence of glutamine and ATP through an activated gamma-phospho-Glu-tRNA(Gln). This is Glutamyl-tRNA(Gln) amidotransferase subunit A from Ehrlichia ruminantium (strain Welgevonden).